A 161-amino-acid chain; its full sequence is Arachidonate 5-lipoxygenase-activating protein (161 aa).

At 1-8 the chain is on the lumenal side; it reads MDQEAVGN. Residues 9-30 form a helical membrane-spanning segment; sequence IVLLAIVTLISVVQNGFFAHKV. Over 31 to 52 the chain is Cytoplasmic; that stretch reads EHESKTHNGRSFQRTGTLAFER. Residues 53–77 traverse the membrane as a helical segment; sequence VYTANQNCVDAYPTFLVMLWSAGLL. The Lumenal segment spans residues 78–80; that stretch reads CSQ. Residues 81-102 traverse the membrane as a helical segment; that stretch reads VPAAFAGLMYLFVRQKYFVGYL. The Cytoplasmic segment spans residues 103 to 107; that stretch reads GERTQ. Residues 108–115 lie within the membrane without spanning it; the sequence is STPGYIFG. Residues 116 to 128 form a helical membrane-spanning segment; it reads KRIILFLFAMSLA. The Lumenal segment spans residues 129 to 161; sequence GILNYFFIALFGSDFENYIKTVTTTISPLLLIP.

This sequence belongs to the MAPEG family. Homotrimer. Interacts with LTC4S and ALOX5.

The protein resides in the nucleus membrane. It localises to the endoplasmic reticulum membrane. In terms of biological role, required for leukotriene biosynthesis by ALOX5 (5-lipoxygenase). Anchors ALOX5 to the membrane. Binds arachidonic acid, and could play an essential role in the transfer of arachidonic acid to ALOX5. Binds to MK-886, a compound that blocks the biosynthesis of leukotrienes. In Bos taurus (Bovine), this protein is Arachidonate 5-lipoxygenase-activating protein (ALOX5AP).